A 353-amino-acid polypeptide reads, in one-letter code: Quinolinate synthase (353 aa).

Positions 47 and 68 each coordinate iminosuccinate. [4Fe-4S] cluster is bound at residue cysteine 113. Residues 139-141 (YAN) and serine 156 each bind iminosuccinate. Cysteine 200 serves as a coordination point for [4Fe-4S] cluster. Residues 226-228 (HPE) and threonine 243 each bind iminosuccinate. Cysteine 297 lines the [4Fe-4S] cluster pocket.

The protein belongs to the quinolinate synthase family. Type 1 subfamily. The cofactor is [4Fe-4S] cluster.

The protein localises to the cytoplasm. The enzyme catalyses iminosuccinate + dihydroxyacetone phosphate = quinolinate + phosphate + 2 H2O + H(+). Its pathway is cofactor biosynthesis; NAD(+) biosynthesis; quinolinate from iminoaspartate: step 1/1. Catalyzes the condensation of iminoaspartate with dihydroxyacetone phosphate to form quinolinate. The polypeptide is Quinolinate synthase (Pectobacterium atrosepticum (strain SCRI 1043 / ATCC BAA-672) (Erwinia carotovora subsp. atroseptica)).